The primary structure comprises 338 residues: tRNA N6-adenosine threonylcarbamoyltransferase (338 aa).

The Fe cation site is built by H111 and H115. Residues 134-138 (LVSGG), D167, G180, and N272 contribute to the substrate site. D300 contributes to the Fe cation binding site.

It belongs to the KAE1 / TsaD family. The cofactor is Fe(2+).

It is found in the cytoplasm. The catalysed reaction is L-threonylcarbamoyladenylate + adenosine(37) in tRNA = N(6)-L-threonylcarbamoyladenosine(37) in tRNA + AMP + H(+). Its function is as follows. Required for the formation of a threonylcarbamoyl group on adenosine at position 37 (t(6)A37) in tRNAs that read codons beginning with adenine. Is involved in the transfer of the threonylcarbamoyl moiety of threonylcarbamoyl-AMP (TC-AMP) to the N6 group of A37, together with TsaE and TsaB. TsaD likely plays a direct catalytic role in this reaction. The polypeptide is tRNA N6-adenosine threonylcarbamoyltransferase (Vibrio atlanticus (strain LGP32) (Vibrio splendidus (strain Mel32))).